Reading from the N-terminus, the 304-residue chain is Murein tetrapeptide carboxypeptidase (304 aa).

Catalysis depends on serine 106, which acts as the Nucleophile. Catalysis depends on charge relay system residues glutamate 200 and histidine 270.

The protein belongs to the peptidase S66 family.

The protein localises to the cytoplasm. It catalyses the reaction N-acetyl-D-glucosaminyl-N-acetylmuramoyl-L-alanyl-meso-2,6-diaminoheptanedioyl-D-alanine + H2O = N-acetyl-D-glucosaminyl-N-acetylmuramoyl-L-alanyl-meso-2,6-diaminoheptanedioate + D-alanine. The protein operates within cell wall biogenesis; peptidoglycan recycling. Its function is as follows. Releases the terminal D-alanine residue from the cytoplasmic tetrapeptide recycling product L-Ala-gamma-D-Glu-meso-Dap-D-Ala. Can also cleave D-Ala from murein derivatives containing the tetrapeptide, i.e. MurNAc-tetrapeptide, UDP-MurNAc-tetrapeptide, GlcNAc-MurNAc-tetrapeptide, and GlcNAc-anhMurNAc-tetrapeptide. Does not act on murein sacculi or cross-linked muropeptides. The tripeptides produced by the LcdA reaction can then be reused as peptidoglycan building blocks; LcdA is thereby involved in murein recycling. The sequence is that of Murein tetrapeptide carboxypeptidase (ldcA) from Escherichia coli O157:H7.